A 269-amino-acid polypeptide reads, in one-letter code: Centromere protein K (269 aa).

A compositionally biased stretch (acidic residues) spans 1–10; that stretch reads MNQEDLDPDS. Residues 1-20 form a disordered region; sequence MNQEDLDPDSTTDVGDVTNT. Coiled-coil stretches lie at residues 22 to 42 and 98 to 151; these read EELI…QNKL and QKLR…NKVE.

This sequence belongs to the CENP-K/MCM22 family. In terms of assembly, component of the CENPA-CAD complex, composed of CENPI, CENPK, CENPL, CENPO, CENPP, CENPQ, CENPR and CENPS. The CENPA-CAD complex interacts with the CENPA-NAC complex, at least composed of CENPA, CENPC, CENPH, CENPM, CENPN, CENPT and CENPU. Interacts directly with CENPH. In terms of tissue distribution, detected in several fetal organs with highest levels in fetal liver. In adults, it is weakly expressed in lung and placenta.

It is found in the nucleus. It localises to the chromosome. Its subcellular location is the centromere. The protein resides in the kinetochore. In terms of biological role, component of the CENPA-CAD (nucleosome distal) complex, a complex recruited to centromeres which is involved in assembly of kinetochore proteins, mitotic progression and chromosome segregation. May be involved in incorporation of newly synthesized CENPA into centromeres via its interaction with the CENPA-NAC complex. Acts in coordination with KNL1 to recruit the NDC80 complex to the outer kinetochore. The sequence is that of Centromere protein K (CENPK) from Homo sapiens (Human).